We begin with the raw amino-acid sequence, 100 residues long: Nucleoid-associated protein Rcas_2292 (100 aa).

It belongs to the YbaB/EbfC family. Homodimer.

It is found in the cytoplasm. Its subcellular location is the nucleoid. In terms of biological role, binds to DNA and alters its conformation. May be involved in regulation of gene expression, nucleoid organization and DNA protection. In Roseiflexus castenholzii (strain DSM 13941 / HLO8), this protein is Nucleoid-associated protein Rcas_2292.